Consider the following 24-residue polypeptide: Brevinin-1Bc (24 aa).

A disulfide bridge connects residues Cys-18 and Cys-24.

As to expression, expressed by the skin glands.

Its subcellular location is the secreted. Its function is as follows. Antibacterial activity against Gram-positive bacterium S.aureus. The polypeptide is Brevinin-1Bc (Lithobates berlandieri (Rio Grande leopard frog)).